A 398-amino-acid polypeptide reads, in one-letter code: Na(+)/H(+) antiporter NhaA (398 aa).

A run of 12 helical transmembrane segments spans residues 8-28 (FLQLEAASGIILFFTAVLALI), 59-79 (LLLWINDGLMAIFFLLVGMEI), 96-116 (LPVIAAIGGMIVPAAMFSFII), 124-144 (AGWAIPMATDIAFALGVLSLL), 154-174 (VFLLALAIIDDLGAIMVIALF), 177-197 (AELHTIPLLFAVALSAMLLML), 202-222 (VMLLTPYLIVGALLWLAVLKS), 223-243 (GVHATIAGVILGFAIPHIRGA), 261-281 (YFILPFFAFANAGLSFSGLSW), 292-312 (IIVGLFIGKPLGVMLVSWLAV), 328-348 (LFGLSVLCGIGFTMSIFIGGL), and 362-382 (LGILFGSLIAAVFGYILLRNA).

It belongs to the NhaA Na(+)/H(+) (TC 2.A.33) antiporter family.

The protein localises to the cell inner membrane. The enzyme catalyses Na(+)(in) + 2 H(+)(out) = Na(+)(out) + 2 H(+)(in). In terms of biological role, na(+)/H(+) antiporter that extrudes sodium in exchange for external protons. The polypeptide is Na(+)/H(+) antiporter NhaA (Tolumonas auensis (strain DSM 9187 / NBRC 110442 / TA 4)).